The chain runs to 214 residues: Ceramide-1-phosphate transfer protein (214 aa).

An N-acylsphingoid base 1-phosphate contacts are provided by aspartate 56, lysine 60, arginine 106, arginine 110, and histidine 150.

The protein belongs to the GLTP family. In terms of tissue distribution, ubiquitous. Detected in heart, brain, placenta, lung, liver, skeletal muscle, kidney, pancreas, spleen, thymus, prostate, testis, ovary, small intestine, colon and peripheral blood leukocytes.

Its subcellular location is the cytoplasm. The protein localises to the cytosol. It localises to the golgi apparatus. It is found in the trans-Golgi network membrane. The protein resides in the cell membrane. Its subcellular location is the endosome membrane. The protein localises to the nucleus outer membrane. The catalysed reaction is N-(hexadecanoyl)-sphing-4-enine-1-phosphate(in) = N-(hexadecanoyl)-sphing-4-enine-1-phosphate(out). It catalyses the reaction N-(9Z-octadecenoyl)-sphing-4-enine-1-phosphate(in) = N-(9Z-octadecenoyl)-sphing-4-enine-1-phosphate(out). Mediates the intracellular transfer of ceramide-1-phosphate (C1P) between organelle membranes and the cell membrane. Required for normal structure of the Golgi stacks. Can bind phosphoceramides with a variety of aliphatic chains, but has a preference for lipids with saturated C16:0 or monounsaturated C18:1 aliphatic chains, and is inefficient with phosphoceramides containing lignoceryl (C24:0). Plays a role in the regulation of the cellular levels of ceramide-1-phosphate, and thereby contributes to the regulation of phospholipase PLA2G4A activity and the release of arachidonic acid. Has no activity with galactosylceramide, lactosylceramide, sphingomyelin, phosphatidylcholine, phosphatidic acid and ceramide. C1P transfer is stimulated by phosphatidylserine in C1P source vesicles. Regulates autophagy, inflammasome mediated IL1B and IL18 processing, and pyroptosis, but not apoptosis. The protein is Ceramide-1-phosphate transfer protein of Homo sapiens (Human).